The following is a 149-amino-acid chain: SsrA-binding protein (149 aa).

It belongs to the SmpB family.

Its subcellular location is the cytoplasm. In terms of biological role, required for rescue of stalled ribosomes mediated by trans-translation. Binds to transfer-messenger RNA (tmRNA), required for stable association of tmRNA with ribosomes. tmRNA and SmpB together mimic tRNA shape, replacing the anticodon stem-loop with SmpB. tmRNA is encoded by the ssrA gene; the 2 termini fold to resemble tRNA(Ala) and it encodes a 'tag peptide', a short internal open reading frame. During trans-translation Ala-aminoacylated tmRNA acts like a tRNA, entering the A-site of stalled ribosomes, displacing the stalled mRNA. The ribosome then switches to translate the ORF on the tmRNA; the nascent peptide is terminated with the 'tag peptide' encoded by the tmRNA and targeted for degradation. The ribosome is freed to recommence translation, which seems to be the essential function of trans-translation. In Wolbachia pipientis subsp. Culex pipiens (strain wPip), this protein is SsrA-binding protein.